The sequence spans 505 residues: Probable RNA exonuclease NGL3 (505 aa).

Disordered stretches follow at residues 1–75 (MDSQ…FPTP) and 334–369 (RNGE…SFTA). Residues 10–23 (SPSQKESSSTSGLV) are compositionally biased toward polar residues. Residues 36–54 (HRDQLSVDQIKKIREERAQ) are compositionally biased toward basic and acidic residues. At serine 62 the chain carries Phosphoserine. The segment covering 338–347 (ESDQDDEECD) has biased composition (acidic residues).

This sequence belongs to the CCR4/nocturin family.

The polypeptide is Probable RNA exonuclease NGL3 (NGL3) (Saccharomyces cerevisiae (strain ATCC 204508 / S288c) (Baker's yeast)).